The sequence spans 304 residues: uncharacterized protein (304 aa).

Transmembrane regions (helical) follow at residues 5-25, 42-62, 68-88, 96-116, 120-140, 150-170, 178-198, 215-235, 245-265, and 268-288; these read TIIL…FIAI, FLLA…PLLF, IFQL…ILYG, IASV…FIFF, LYFF…IILF, TIKG…IYLY, ISIL…FLVI, ILAT…SYFY, ASTI…FVWG, and IGID…ITIF. EamA domains lie at 16–140 and 162–288; these read ITWG…IILF and TSHA…ITIF.

The protein belongs to the EamA transporter family.

It is found in the cell membrane. This is an uncharacterized protein from Buchnera aphidicola subsp. Schlechtendalia chinensis.